A 396-amino-acid polypeptide reads, in one-letter code: Acetyl-CoA acetyltransferase ERG10, cytosolic (396 aa).

Residue C91 is the Acyl-thioester intermediate of the active site. Y186 contributes to the K(+) binding site. CoA is bound by residues N227 and K230. Residues A246, P247, and V347 each coordinate K(+). Active-site proton acceptor residues include H351 and C381. N382 contacts chloride.

The protein belongs to the thiolase-like superfamily. Thiolase family. As to quaternary structure, homotetramer. K(+) is required as a cofactor.

Its subcellular location is the cytoplasm. The protein resides in the cytosol. It carries out the reaction 2 acetyl-CoA = acetoacetyl-CoA + CoA. It functions in the pathway metabolic intermediate biosynthesis; (R)-mevalonate biosynthesis; (R)-mevalonate from acetyl-CoA: step 1/3. Functionally, acetyl-CoA acetyltransferase; part of the first module of ergosterol biosynthesis pathway that includes the early steps of the pathway, conserved across all eukaryotes, and which results in the formation of mevalonate from acetyl-coenzyme A (acetyl-CoA). ERG10B catalyzes the formation of acetoacetyl-CoA from acetyl-CoA. The first module starts with the action of the cytosolic acetyl-CoA acetyltransferase ERG10B that catalyzes the formation of acetoacetyl-CoA. The hydroxymethylglutaryl-CoA synthases ERG13 then condenses acetyl-CoA with acetoacetyl-CoA to form HMG-CoA. The rate-limiting step of the early module is the reduction to mevalonate by the 3-hydroxy-3-methylglutaryl-coenzyme A (HMG-CoA) reductases HMG1. This Gibberella zeae (strain ATCC MYA-4620 / CBS 123657 / FGSC 9075 / NRRL 31084 / PH-1) (Wheat head blight fungus) protein is Acetyl-CoA acetyltransferase ERG10, cytosolic.